The sequence spans 288 residues: Energy-coupling factor transporter ATP-binding protein EcfA2 (288 aa).

The 244-residue stretch at 3-246 folds into the ABC transporter domain; the sequence is IKLEQLGYCY…PDALVDLGLS (244 aa). 40–47 serves as a coordination point for ATP; that stretch reads GHTGSGKS.

It belongs to the ABC transporter superfamily. Energy-coupling factor EcfA family. As to quaternary structure, forms a stable energy-coupling factor (ECF) transporter complex composed of 2 membrane-embedded substrate-binding proteins (S component), 2 ATP-binding proteins (A component) and 2 transmembrane proteins (T component).

Its subcellular location is the cell membrane. ATP-binding (A) component of a common energy-coupling factor (ECF) ABC-transporter complex. Unlike classic ABC transporters this ECF transporter provides the energy necessary to transport a number of different substrates. The protein is Energy-coupling factor transporter ATP-binding protein EcfA2 of Listeria welshimeri serovar 6b (strain ATCC 35897 / DSM 20650 / CCUG 15529 / CIP 8149 / NCTC 11857 / SLCC 5334 / V8).